The primary structure comprises 102 residues: uncharacterized protein (102 aa).

This is an uncharacterized protein from Escherichia coli (strain K12).